The sequence spans 172 residues: 3-hydroxydecanoyl-[acyl-carrier-protein] dehydratase (172 aa).

The active site involves His-71.

The protein belongs to the thioester dehydratase family. FabA subfamily. As to quaternary structure, homodimer.

It localises to the cytoplasm. The catalysed reaction is a (3R)-hydroxyacyl-[ACP] = a (2E)-enoyl-[ACP] + H2O. The enzyme catalyses (3R)-hydroxydecanoyl-[ACP] = (2E)-decenoyl-[ACP] + H2O. It carries out the reaction (2E)-decenoyl-[ACP] = (3Z)-decenoyl-[ACP]. It functions in the pathway lipid metabolism; fatty acid biosynthesis. Functionally, necessary for the introduction of cis unsaturation into fatty acids. Catalyzes the dehydration of (3R)-3-hydroxydecanoyl-ACP to E-(2)-decenoyl-ACP and then its isomerization to Z-(3)-decenoyl-ACP. Can catalyze the dehydratase reaction for beta-hydroxyacyl-ACPs with saturated chain lengths up to 16:0, being most active on intermediate chain length. This Vibrio parahaemolyticus serotype O3:K6 (strain RIMD 2210633) protein is 3-hydroxydecanoyl-[acyl-carrier-protein] dehydratase.